The sequence spans 76 residues: Putative defensin-like protein 184 (76 aa).

An N-terminal signal peptide occupies residues 1-21; that stretch reads MKNSSILFVLIIVVFLISSSG. 4 cysteine pairs are disulfide-bonded: Cys-32–Cys-76, Cys-38–Cys-58, Cys-44–Cys-70, and Cys-48–Cys-72.

Belongs to the DEFL family.

The protein localises to the secreted. This is Putative defensin-like protein 184 (LCR18) from Arabidopsis thaliana (Mouse-ear cress).